The primary structure comprises 278 residues: Cytoplasmic envelopment protein 1 (278 aa).

It belongs to the herpesviridae cytoplasmic envelopment protein 1 family. In terms of assembly, interacts with BSRF1 tegument protein; the BBRF2-BSRF1 complexes oligomerize and might play a role in tethering the viral nucleocapsids to the host Golgi membrane during secondary envelopment.

It localises to the virion. It is found in the virion tegument. Its subcellular location is the host cytoplasm. The protein resides in the host Golgi apparatus. Its function is as follows. Plays a critical role in cytoplasmic virus egress. Participates in the final step of tegumentation and envelope acquisition within the host cytoplasm. The protein is Cytoplasmic envelopment protein 1 of Homo sapiens (Human).